The following is an 880-amino-acid chain: Alanine--tRNA ligase (880 aa).

His-569, His-573, Cys-671, and His-675 together coordinate Zn(2+).

This sequence belongs to the class-II aminoacyl-tRNA synthetase family. As to quaternary structure, homotetramer. Zn(2+) is required as a cofactor.

The protein resides in the cytoplasm. It carries out the reaction tRNA(Ala) + L-alanine + ATP = L-alanyl-tRNA(Ala) + AMP + diphosphate. In terms of biological role, catalyzes the attachment of alanine to tRNA(Ala) in a two-step reaction: alanine is first activated by ATP to form Ala-AMP and then transferred to the acceptor end of tRNA(Ala). Also edits incorrectly charged Ser-tRNA(Ala) and Gly-tRNA(Ala) via its editing domain. The chain is Alanine--tRNA ligase from Buchnera aphidicola subsp. Baizongia pistaciae (strain Bp).